The chain runs to 1150 residues: Apomucin (1150 aa).

Composition is skewed to low complexity over residues 1-36 (ETAR…TGAS) and 46-79 (SVAG…SSVG). Tandem repeats lie at residues 1–44 (ETAR…ETSR), 45–125 (ISVA…ETSR), 126–206 (ISVA…ETSR), 207–287 (ISVA…ETSR), and 288–368 (ISVA…ETSR). The interval 1–368 (ETARPSVAGS…ASIGQPETSR (368 aa)) is 6 X 81 AA tandem repeats. 2 disordered regions span residues 1-730 (ETAR…KTGI) and 776-925 (APGS…PAPL). Ser46, Ser50, Ser51, Ser57, Ser58, and Ser61 each carry an O-linked (GalNAc...) serine; partial glycan. Residue Thr66 is glycosylated (O-linked (GalNAc...) threonine; partial). An O-linked (GalNAc...) serine; partial glycan is attached at Ser67. 2 O-linked (GalNAc...) threonine; partial glycosylation sites follow: Thr73 and Thr74. O-linked (GalNAc...) serine; partial glycosylation is found at Ser76 and Ser77. O-linked (GalNAc...) threonine; partial glycans are attached at residues Thr81 and Thr83. Over residues 86–117 (PSVAGSGTTGTVSGASGSTGSSSGSPGATGAS) the composition is skewed to low complexity. O-linked (GalNAc...) serine; partial glycosylation is found at Ser87 and Ser91. 3 O-linked (GalNAc...) threonine; partial glycosylation sites follow: Thr93, Thr94, and Thr96. Ser98, Ser101, and Ser103 each carry an O-linked (GalNAc...) serine; partial glycan. Thr104 carries O-linked (GalNAc...) threonine; partial glycosylation. O-linked (GalNAc...) serine; partial glycans are attached at residues Ser106, Ser107, Ser108, and Ser110. Thr114 carries an O-linked (GalNAc...) threonine; partial glycan. A glycan (O-linked (GalNAc...) serine; partial) is linked at Ser117. An O-linked (GalNAc...) threonine; partial glycan is attached at Thr123. Ser124 is a glycosylation site (O-linked (GalNAc...) serine; partial). Composition is skewed to low complexity over residues 127–160 (SVAG…SSVG), 167–198 (PSVA…TGAS), 208–241 (SVAG…SSVG), 248–279 (PSVA…TGAS), 289–322 (SVAG…SSVG), 329–360 (PSVA…TGAS), and 370–396 (SVAG…ATTS). Residues 369 to 391 (ISVAGSSGAPAVSSGASQAAGTS) form a 6; truncated repeat. N-linked (GlcNAc...) asparagine glycosylation is present at Asn418. Polar residues predominate over residues 442 to 459 (SYNTEATTSIGRSGTTHT). Low complexity predominate over residues 473 to 506 (SHSSQSSKPGSSVTTPGSPESGSETGTSGEFSTT). 2 stretches are compositionally biased toward polar residues: residues 507–517 (VISGSSHTEAT) and 537–547 (ELSGTTIASGN). The N-linked (GlcNAc...) asparagine glycan is linked to Asn547. The segment covering 548–558 (ATTEATTSTET) has biased composition (low complexity). The span at 564–586 (TGAQTTVPGSQVSGSETGTSEAV) shows a compositional bias: polar residues. Positions 590–625 (AIASGSSSTGTTSGASDSQVTGSRTGTTGVVLGTTV) are enriched in low complexity. Composition is skewed to polar residues over residues 626–635 (APGSSSTGAT) and 643–661 (GTRS…TTYE). The span at 671-682 (GGSGTPGSGINT) shows a compositional bias: gly residues. 3 stretches are compositionally biased toward polar residues: residues 688-697 (QVTGIQTGTT), 706-729 (LPGS…SKTG), and 779-788 (SFNTKATTPT). Residues 790 to 833 (VRAATGAGTAVGATSRSTGISTGPENSTPGTTETGSGTTSSPGG) show a composition bias toward low complexity. Over residues 875–908 (ETTTAPRISATGSTSVSKEITASPKVSSPETTAG) the composition is skewed to polar residues. 4 N-linked (GlcNAc...) asparagine glycosylation sites follow: Asn917, Asn985, Asn1002, and Asn1068. In terms of domain architecture, VWFC spans 929–995 (PVCHGPLGEE…DTCCEIGHCE (67 aa)). 4 disulfide bridges follow: Cys1062/Cys1109, Cys1076/Cys1123, Cys1085/Cys1139, and Cys1089/Cys1141. The CTCK domain maps to 1062 to 1146 (CKPSPVNVTV…TACSCLDPCQ (85 aa)).

As to quaternary structure, intermolecular disulfide bonds could help maintain a multimeric mucin structure. In terms of processing, extensively O-glycosylated on most but not all Ser and Thr residues of the repeat units. Highest glycosylation appears to occur on Ser residues which have Gly at positions at +2 or -2 from the glycosylation site or, where Gly is the penultimate residue. The presence of proline (usually at position +3 or -3) appears to also enhance glycosylation. As to expression, submaxillary mucosae.

The protein localises to the secreted. In terms of biological role, apomucin is part of mucin, the major glycoprotein synthesized and secreted by mucous cells of the submaxillary gland. Its highly viscous aqueous solutions serve to lubricate the oral cavity and to protect it from the external environment. This chain is Apomucin, found in Sus scrofa (Pig).